The following is a 149-amino-acid chain: Calmodulin (149 aa).

Ala2 bears the N-acetylalanine mark. EF-hand domains follow at residues 8–43 (EQIA…LGQN), 44–79 (PTEA…KMKD), 81–116 (DSEE…LGEK), and 117–149 (LTDE…MTNK). Residues Asp21, Asp23, Asp25, Thr27, Glu32, Asp57, Asp59, Asn61, Thr63, Glu68, Asp94, Asp96, Asn98, and Glu105 each coordinate Ca(2+). Lys116 is modified (N6,N6,N6-trimethyllysine). Ca(2+)-binding residues include Asp130, Asp132, Asp134, Gln136, and Glu141.

It belongs to the calmodulin family.

Its function is as follows. Calmodulin mediates the control of a large number of enzymes, ion channels and other proteins by Ca(2+). Among the enzymes to be stimulated by the calmodulin-Ca(2+) complex are a number of protein kinases and phosphatases. The protein is Calmodulin of Ciona intestinalis (Transparent sea squirt).